The following is a 433-amino-acid chain: Serine hydroxymethyltransferase (433 aa).

(6S)-5,6,7,8-tetrahydrofolate-binding positions include L127 and 131 to 133 (GHL). Residue K236 is modified to N6-(pyridoxal phosphate)lysine.

It belongs to the SHMT family. In terms of assembly, homodimer. The cofactor is pyridoxal 5'-phosphate.

The protein localises to the cytoplasm. The catalysed reaction is (6R)-5,10-methylene-5,6,7,8-tetrahydrofolate + glycine + H2O = (6S)-5,6,7,8-tetrahydrofolate + L-serine. The protein operates within one-carbon metabolism; tetrahydrofolate interconversion. It participates in amino-acid biosynthesis; glycine biosynthesis; glycine from L-serine: step 1/1. In terms of biological role, catalyzes the reversible interconversion of serine and glycine with tetrahydrofolate (THF) serving as the one-carbon carrier. This reaction serves as the major source of one-carbon groups required for the biosynthesis of purines, thymidylate, methionine, and other important biomolecules. Also exhibits THF-independent aldolase activity toward beta-hydroxyamino acids, producing glycine and aldehydes, via a retro-aldol mechanism. In Corynebacterium urealyticum (strain ATCC 43042 / DSM 7109), this protein is Serine hydroxymethyltransferase.